Reading from the N-terminus, the 391-residue chain is MAIINMSDLDLQGKRVLIREDLNVPVSNGVVTSDARLRASLPTIELALAKGAAVMVMSHLGRPTEGEYNSEFSMQPVVDYLAKALSSPVRLATDYLDGVEVAVGEVVVFENVRFNKGEKKNDEALSKKMAALCDVYVMDAFGTAHRAEASTNGVGLYAPIACAGPLLAQELNALGKALDNPARPMVAIVGGSKVSTKLTVLESLSGIVDQLVVGGGIANTFIAAAGHNVGKSLYEADLIDEAKRLVANAQSRGGDIPVPTDVVVAGEFSPTATATLKSVSDVSDSDMIFDIGPDSAEALAKIIESAGTIVWNGPVGVFEFDQFGEGTKRIAQAIADSKAFSIAGGGDTLAAVDKYGIADKVSYISTGGGAFLEFLEGKELPAVAMLKKRGA.

Substrate contacts are provided by residues 21-23, Arg36, 59-62, Arg113, and Arg146; these read DLN and HLGR. Residues Lys197, Glu319, and 345 to 348 each bind ATP; that span reads GGDT.

Belongs to the phosphoglycerate kinase family. Monomer.

It is found in the cytoplasm. It catalyses the reaction (2R)-3-phosphoglycerate + ATP = (2R)-3-phospho-glyceroyl phosphate + ADP. It functions in the pathway carbohydrate degradation; glycolysis; pyruvate from D-glyceraldehyde 3-phosphate: step 2/5. This Shewanella putrefaciens (strain CN-32 / ATCC BAA-453) protein is Phosphoglycerate kinase.